Consider the following 100-residue polypeptide: Large ribosomal subunit protein bL21 (100 aa).

Belongs to the bacterial ribosomal protein bL21 family. As to quaternary structure, part of the 50S ribosomal subunit. Contacts proteins L15 and L20.

Its function is as follows. Binds directly to 23S rRNA, probably serving to organize its structure. The sequence is that of Large ribosomal subunit protein bL21 from Deinococcus radiodurans (strain ATCC 13939 / DSM 20539 / JCM 16871 / CCUG 27074 / LMG 4051 / NBRC 15346 / NCIMB 9279 / VKM B-1422 / R1).